The primary structure comprises 284 residues: MEMO1 family protein YN1551_0739 (284 aa).

Belongs to the MEMO1 family.

This chain is MEMO1 family protein YN1551_0739, found in Saccharolobus islandicus (strain Y.N.15.51 / Yellowstone #2) (Sulfolobus islandicus).